We begin with the raw amino-acid sequence, 260 residues long: Ribonuclease HII (260 aa).

The region spanning 73–260 is the RNase H type-2 domain; that stretch reads LHIAGIDEAG…APVQQQLDIV (188 aa). Positions 79, 80, and 171 each coordinate a divalent metal cation.

This sequence belongs to the RNase HII family. Requires Mn(2+) as cofactor. It depends on Mg(2+) as a cofactor.

Its subcellular location is the cytoplasm. The enzyme catalyses Endonucleolytic cleavage to 5'-phosphomonoester.. Endonuclease that specifically degrades the RNA of RNA-DNA hybrids. The sequence is that of Ribonuclease HII from Desulfitobacterium hafniense (strain Y51).